The chain runs to 1596 residues: MFSGPSGHAHTISYGGGIGLGTGGGGGSGGSGSGSQGGGGGIGIGGGGVAGLQDCDGYDFTKCENAARWRGLFTPSLKKVLEQVHPRVTAKEDALLYVEKLCLRLLAMLCAKPLPHSVQDVEEKVNKSFPAPIDQWALNEAKEVINSKKRKSVLPTEKVHTLLQKDVLQYKIDSSVSAFLVAVLEYISADILKMAGDYVIKIAHCEITKEDIEVVMNADRVLMDMLNQSEAHILPSPLSLPAQRASATYEETVKELIHDEKQYQRDLHMIIRVFREELVKIVSDPRELEPIFSNIMDIYEVTVTLLGSLEDVIEMSQEQSAPCVGSCFEELAEAEEFDVYKKYAYDVTSQASRDALNNLLSKPGASSLTTAGHGFRDAVKYYLPKLLLVPICHAFVYFDYIKHLKDLSSSQDDIESFEQVQGLLHPLHCDLEKVMASLSKERQVPVSGRVRRQLAIERTRELQMKVEHWEDKDVGQNCNEFIREDSLSKLGSGKRIWSERKVFLFDGLMVLCKANTKKQTPSAGATAYDYRLKEKYFMRRVDINDRPDSDDLKNSFELAPRMQPPIVLTAKNAQHKHDWMADLLMVITKSMLDRHLDSILQDIERKHPLRMPSPEIYKFAVPDSGDNIVLEERESAGVPMIKGATLCKLIERLTYHIYADPTFVRTFLTTYRYFCSPQQLLQLLVERFNIPDPSLVYQDTGTAGAGGMGGVGGDKEHKNSHREDWKRYRKEYVQPVQFRVLNVLRHWVDHHFYDFEKDPMLLEKLLNFLEHVNGKSMRKWVDSVLKIVQRKNEQEKSNKKIVYAYGHDPPPIEHHLSVPNDEITLLTLHPLELARQLTLLEFEMYKNVKPSELVGSPWTKKDKEVKSPNLLKIMKHTTNVTRWIEKSITEAENYEERLAIMQRAIEVMMVMLELNNFNGILSIVAAMGTASVYRLRWTFQGLPERYRKFLEECRELSDDHLKKYQERLRSINPPCVPFFGRYLTNILHLEEGNPDLLANTELINFSKRRKVAEIIGEIQQYQNQPYCLNEESTIRQFFEQLDPFNGLSDKQMSDYLYNESLRIEPRGCKTVPKFPRKWPHIPLKSPGIKPRRQNQTNSSSKLSNSTSSVAAAAAASSTATSIATASAPSLHASSIMDAPTAAAANAGSGTLAGEQSPQHNPHAFSVFAPVIIPERNTSSWSGTPQHTRTDQNNGEVSVPAPHLPKKPGAHVWANNNSTLASASAMDVVFSPALPEHLPPQSLPDSNPFASDTEAPPSPLPKLVVSPRHETGNRSPFHGRMQNSPTHSTASTVTLTGMSTSGGEEFCAGGFYFNSAHQGQPGAVPISPHVNVPMATNMEYRAVPPPLPPRRKERTESCADMAQKRQAPDAPTLPPRDGELSPPPIPPRLNHSTGISYLRQSHGKSKEFVGNSSLLLPNTSSIMIRRNSAIEKRAAATSQPNQAAAGPISTTLVTVSQAVATDEPLPLPISPAASSSTTTSPLTPAMSPMSPNIPSHPVESTSSSYAHQLRMRQQQQQQTHPAIYSQHHQHHATHLPHHPHQHHSNPTQSRSSPKEFFPIATSLEGTPKLPPKPSLSANFYNNPDKGTMFLYPSTNEE.

Residues 248–434 (TYEETVKELI…HPLHCDLEKV (187 aa)) form the DH domain. The PH domain maps to 480–588 (EFIREDSLSK…WMADLLMVIT (109 aa)). Residues 637 to 792 (GVPMIKGATL…SVLKIVQRKN (156 aa)) enclose the N-terminal Ras-GEF domain. Residues 829–1066 (HPLELARQLT…YNESLRIEPR (238 aa)) enclose the Ras-GEF domain. 5 disordered regions span residues 1073–1105 (KFPRKWPHIPLKSPGIKPRRQNQTNSSSKLSNS), 1175–1212 (RNTSSWSGTPQHTRTDQNNGEVSVPAPHLPKKPGAHVW), 1235–1291 (EHLP…TAST), 1340–1392 (RAVP…NHST), and 1465–1596 (PLPI…TNEE). The segment covering 1096-1105 (TNSSSKLSNS) has biased composition (low complexity). Composition is skewed to polar residues over residues 1175-1195 (RNTSSWSGTPQHTRTDQNNGE) and 1280-1291 (MQNSPTHSTAST). Basic and acidic residues predominate over residues 1352–1366 (ERTESCADMAQKRQA). Low complexity predominate over residues 1469–1489 (SPAASSSTTTSPLTPAMSPMS). A compositionally biased stretch (basic residues) spans 1526 to 1542 (HHQHHATHLPHHPHQHH). Ser1550 and Ser1551 each carry phosphoserine.

As to quaternary structure, may form a complex with sevenless and DRK.

Functionally, promotes the exchange of Ras-bound GDP by GTP. Functions in signaling pathways initiated by the sevenless and epidermal growth factor receptor tyrosine kinases; implies a role for the ras pathway in neuronal development. The polypeptide is Protein son of sevenless (Sos) (Drosophila melanogaster (Fruit fly)).